A 292-amino-acid chain; its full sequence is Lyso-ornithine lipid O-acyltransferase (292 aa).

A helical transmembrane segment spans residues 11–31 (GMLLVMVSLVLMPVQILCLWL). The tract at residues 258 to 292 (RLRGRSRSAAKGEPAPACSAAPDIPSDAQRSRLAP) is disordered.

It belongs to the 1-acyl-sn-glycerol-3-phosphate acyltransferase family. OlsA subfamily.

It localises to the membrane. It catalyses the reaction a lyso-ornithine lipid + a fatty acyl-[ACP] = an N(2)-[(3R)-3-(acyloxy)acyl]-L-ornithine lipid + holo-[ACP]. It participates in lipid metabolism. Functionally, catalyzes the second step in the formation of ornithine lipids, which are phosphorus-free membrane lipids. Uses acyl-acyl carrier protein (acyl-AcpP) as an acyl donor and converts lyso-ornithine lipid (LOL) into ornithine lipid (OL). This chain is Lyso-ornithine lipid O-acyltransferase, found in Rhizobium meliloti (strain 1021) (Ensifer meliloti).